The primary structure comprises 108 residues: Thiosulfate sulfurtransferase GlpE (108 aa).

Residues 17–105 (QEKEAVLVDI…WQRQFPAEVA (89 aa)) form the Rhodanese domain. Catalysis depends on C65, which acts as the Cysteine persulfide intermediate.

This sequence belongs to the GlpE family.

The protein resides in the cytoplasm. It carries out the reaction thiosulfate + hydrogen cyanide = thiocyanate + sulfite + 2 H(+). The enzyme catalyses thiosulfate + [thioredoxin]-dithiol = [thioredoxin]-disulfide + hydrogen sulfide + sulfite + 2 H(+). In terms of biological role, transferase that catalyzes the transfer of sulfur from thiosulfate to thiophilic acceptors such as cyanide or dithiols. May function in a CysM-independent thiosulfate assimilation pathway by catalyzing the conversion of thiosulfate to sulfite, which can then be used for L-cysteine biosynthesis. This chain is Thiosulfate sulfurtransferase GlpE, found in Escherichia coli O45:K1 (strain S88 / ExPEC).